The chain runs to 161 residues: Regulator of ribonuclease activity A (161 aa).

The protein belongs to the RraA family. In terms of assembly, homotrimer. Binds to both RNA-binding sites in the C-terminal region of Rne and to RhlB.

The protein resides in the cytoplasm. Functionally, globally modulates RNA abundance by binding to RNase E (Rne) and regulating its endonucleolytic activity. Can modulate Rne action in a substrate-dependent manner by altering the composition of the degradosome. Modulates RNA-binding and helicase activities of the degradosome. This is Regulator of ribonuclease activity A from Klebsiella pneumoniae (strain 342).